The sequence spans 130 residues: Small ribosomal subunit protein uS11 (130 aa).

The protein belongs to the universal ribosomal protein uS11 family. As to quaternary structure, part of the 30S ribosomal subunit. Interacts with proteins S7 and S18. Binds to IF-3.

Its function is as follows. Located on the platform of the 30S subunit, it bridges several disparate RNA helices of the 16S rRNA. Forms part of the Shine-Dalgarno cleft in the 70S ribosome. The chain is Small ribosomal subunit protein uS11 from Thermosynechococcus vestitus (strain NIES-2133 / IAM M-273 / BP-1).